The sequence spans 107 residues: UPF0145 protein ESA_02470 (107 aa).

Belongs to the UPF0145 family.

This is UPF0145 protein ESA_02470 from Cronobacter sakazakii (strain ATCC BAA-894) (Enterobacter sakazakii).